A 464-amino-acid chain; its full sequence is tRNA modification GTPase MnmE (464 aa).

3 residues coordinate (6S)-5-formyl-5,6,7,8-tetrahydrofolate: R25, E87, and K130. The region spanning 226 to 386 (GLSVVLAGQP…LRAELLRIAG (161 aa)) is the TrmE-type G domain. K(+) is bound at residue N236. GTP is bound by residues 236 to 241 (NVGKSS), 255 to 261 (TPIAGTT), and 280 to 283 (DTAG). S240 is a Mg(2+) binding site. Positions 255, 257, and 260 each coordinate K(+). T261 serves as a coordination point for Mg(2+). Residue K464 coordinates (6S)-5-formyl-5,6,7,8-tetrahydrofolate.

This sequence belongs to the TRAFAC class TrmE-Era-EngA-EngB-Septin-like GTPase superfamily. TrmE GTPase family. In terms of assembly, homodimer. Heterotetramer of two MnmE and two MnmG subunits. The cofactor is K(+).

Its subcellular location is the cytoplasm. Exhibits a very high intrinsic GTPase hydrolysis rate. Involved in the addition of a carboxymethylaminomethyl (cmnm) group at the wobble position (U34) of certain tRNAs, forming tRNA-cmnm(5)s(2)U34. The sequence is that of tRNA modification GTPase MnmE from Burkholderia ambifaria (strain MC40-6).